Reading from the N-terminus, the 129-residue chain is Large-conductance mechanosensitive channel (129 aa).

Helical transmembrane passes span 10 to 30 and 70 to 90; these read FAVKGNVVDMAVGVIIGGAFG and AVMLKYGAFIQNVFLLGVIAI.

The protein belongs to the MscL family. In terms of assembly, homopentamer.

It localises to the cell inner membrane. Channel that opens in response to stretch forces in the membrane lipid bilayer. May participate in the regulation of osmotic pressure changes within the cell. The sequence is that of Large-conductance mechanosensitive channel from Actinobacillus pleuropneumoniae serotype 3 (strain JL03).